Consider the following 462-residue polypeptide: UDP-N-acetylmuramoylalanine--D-glutamate ligase (462 aa).

Residue 120-126 participates in ATP binding; the sequence is GTNGKTT.

Belongs to the MurCDEF family.

Its subcellular location is the cytoplasm. The enzyme catalyses UDP-N-acetyl-alpha-D-muramoyl-L-alanine + D-glutamate + ATP = UDP-N-acetyl-alpha-D-muramoyl-L-alanyl-D-glutamate + ADP + phosphate + H(+). The protein operates within cell wall biogenesis; peptidoglycan biosynthesis. Its function is as follows. Cell wall formation. Catalyzes the addition of glutamate to the nucleotide precursor UDP-N-acetylmuramoyl-L-alanine (UMA). This is UDP-N-acetylmuramoylalanine--D-glutamate ligase from Bdellovibrio bacteriovorus (strain ATCC 15356 / DSM 50701 / NCIMB 9529 / HD100).